A 752-amino-acid chain; its full sequence is Catalase-peroxidase (752 aa).

Residues 1-21 are disordered; the sequence is MSNESKCPFHQTAGGGTTNRD. Positions 91–245 form a cross-link, tryptophyl-tyrosyl-methioninium (Trp-Tyr) (with M-271); sequence WHSAGTYRIG…LAAVQMGLIY (155 aa). The active-site Proton acceptor is the His-92. Positions 204-228 are disordered; sequence QAPGQGDLVAEPAKHGEEQNRDLSA. The span at 215–228 shows a compositional bias: basic and acidic residues; sequence PAKHGEEQNRDLSA. The tryptophyl-tyrosyl-methioninium (Tyr-Met) (with W-91) cross-link spans 245-271; it reads YVNPEGPEGNPDPVASGKDIRETFGRM. His-286 serves as a coordination point for heme. Positions 366 to 391 are disordered; it reads AHQWQPKEGKGAGTVPDAHDPSKRHA.

It belongs to the peroxidase family. Peroxidase/catalase subfamily. Homodimer or homotetramer. The cofactor is heme b. In terms of processing, formation of the three residue Trp-Tyr-Met cross-link is important for the catalase, but not the peroxidase activity of the enzyme.

The enzyme catalyses H2O2 + AH2 = A + 2 H2O. It carries out the reaction 2 H2O2 = O2 + 2 H2O. Bifunctional enzyme with both catalase and broad-spectrum peroxidase activity. The protein is Catalase-peroxidase of Pseudomonas putida (strain W619).